Here is a 637-residue protein sequence, read N- to C-terminus: Early transcription factor 70 kDa subunit (637 aa).

In terms of domain architecture, Helicase ATP-binding spans 32–185 (RTIIDENRSV…GHIIDLMSEE (154 aa)). Position 45–52 (45–52 (HIMGSGKT)) interacts with ATP. A DEXH box motif is present at residues 135–138 (DEAH). The Helicase C-terminal domain occupies 327 to 507 (KFKYFINRIQ…VLPFDIKKLL (181 aa)).

It belongs to the helicase family. VETF subfamily. Heterodimer of a 70 kDa and a 82 kDa subunit. Part of the early transcription complex composed of ETF, RAP94/OPG109, and the DNA-directed RNA polymerase.

The protein localises to the virion. Its function is as follows. Acts with RNA polymerase to initiate transcription from early gene promoters. Is recruited by the RPO-associated protein of 94 kDa RAP94/OPG109 to form the early transcription complex, which also contains the core RNA polymerase. ETF heterodimer binds to early gene promoters. The protein is Early transcription factor 70 kDa subunit (OPG118) of Homo sapiens (Human).